The sequence spans 360 residues: Nucleoporin SEH1 (360 aa).

WD repeat units lie at residues 10-49 (DHKD…EWHC), 55-96 (THSG…SNDK), 111-152 (DSRT…NLSQ), 160-210 (SCKL…RKYA), 217-258 (TVTD…KELT), and 276-315 (NHNS…NWKC). Lys-12 is covalently cross-linked (Glycyl lysine isopeptide (Lys-Gly) (interchain with G-Cter in SUMO2)). Ser-190 is modified (phosphoserine). The segment covering 324-342 (SPVNGSSQQGNSNPSVGSN) has biased composition (low complexity). A disordered region spans residues 324-360 (SPVNGSSQQGNSNPSVGSNIPSLQNSLNGSSAGRKHS). The segment covering 343-354 (IPSLQNSLNGSS) has biased composition (polar residues).

Belongs to the WD repeat SEC13 family. In terms of assembly, component of the Nup107-160 subcomplex of the nuclear pore complex (NPC). The Nup107-160 subcomplex includes NUP160, NUP133, NUP107, NUP98, NUP85, NUP43, NUP37, SEH1 and SEC13. The SEH1 subunit appears to be only weakly associated with the Nup107-160 subcomplex. Component of the GATOR2 subcomplex, composed of MIOS, SEC13, SEH1L, WDR24 and WDR59. The GATOR2 complex interacts with CASTOR1 and CASTOR2; the interaction is negatively regulated by arginine. The GATOR2 complex interacts with SESN1, SESN2 and SESN3; the interaction is negatively regulated by amino acids. SESN1, SESN2 and SESN3 convey leucine availability via direct interaction with SEH1L and WDR24.

Its subcellular location is the chromosome. It is found in the centromere. The protein localises to the kinetochore. It localises to the nucleus. The protein resides in the nuclear pore complex. Its subcellular location is the lysosome membrane. The GATOR2 complex is negatively regulated by the upstream amino acid sensors CASTOR1 and SESN2, which sequester the GATOR2 complex in absence of amino acids. In the presence of abundant amino acids, GATOR2 is released from CASTOR1 and SESN2 and activated. Its function is as follows. Component of the Nup107-160 subcomplex of the nuclear pore complex (NPC). The Nup107-160 subcomplex is required for the assembly of a functional NPC. The Nup107-160 subcomplex is also required for normal kinetochore microtubule attachment, mitotic progression and chromosome segregation. This subunit plays a role in recruitment of the Nup107-160 subcomplex to the kinetochore. In terms of biological role, as a component of the GATOR2 complex, functions as an activator of the amino acid-sensing branch of the mTORC1 signaling pathway. The GATOR2 complex indirectly activates mTORC1 through the inhibition of the GATOR1 subcomplex. GATOR2 probably acts as an E3 ubiquitin-protein ligase toward GATOR1. In the presence of abundant amino acids, the GATOR2 complex mediates ubiquitination of the NPRL2 core component of the GATOR1 complex, leading to GATOR1 inactivation. In the absence of amino acids, GATOR2 is inhibited, activating the GATOR1 complex. Within the GATOR2 complex, SEC13 and SEH1L are required to stabilize the complex. The polypeptide is Nucleoporin SEH1 (SEH1L) (Bos taurus (Bovine)).